The following is a 259-amino-acid chain: O-antigen export system permease protein RfbA (259 aa).

6 helical membrane-spanning segments follow: residues 33-53, 73-95, 111-131, 142-162, 176-196, and 228-248; these read LGYLWSVANPLLFAMIYYFIF, FPWQWFASSATNSLFSFIANAQI, VMMEGLHFLCTIPVIVVFLFV, WGIPLIAIGQVIFTFGVSIIF, VSLGIMLMFYCTPILYASDMI, and EYISILYFTGIILTVVGLSIF. Residues 33–251 form the ABC transmembrane type-2 domain; it reads LGYLWSVANP…VVGLSIFNKL (219 aa).

It belongs to the ABC-2 integral membrane protein family.

Its subcellular location is the cell inner membrane. Functionally, may form an ATP-driven O-antigen export apparatus, in association with RfbB. This Klebsiella pneumoniae protein is O-antigen export system permease protein RfbA (rfbA).